Reading from the N-terminus, the 117-residue chain is MTRVRRGYIARRRRTKIRLFASTFRGAHSRLTRTITQQKMRALVSTHRDRGRQKINFRRLWITRINAVTRENRVSYSYSRLIHDLYKRQLLLNRKIPAQIAISNRNCLYTISSEIIK.

Belongs to the bacterial ribosomal protein bL20 family.

The protein localises to the plastid. It is found in the chloroplast. Binds directly to 23S ribosomal RNA and is necessary for the in vitro assembly process of the 50S ribosomal subunit. It is not involved in the protein synthesizing functions of that subunit. The polypeptide is Large ribosomal subunit protein bL20c (Chloranthus spicatus (Chulantree)).